The following is a 297-amino-acid chain: Acetyl-coenzyme A carboxylase carboxyl transferase subunit beta (297 aa).

One can recognise a CoA carboxyltransferase N-terminal domain in the interval 27-296 (LWHKCPSCEA…PEEAREAAAV (270 aa)). Residues C31, C34, C50, and C53 each contribute to the Zn(2+) site. The C4-type zinc-finger motif lies at 31 to 53 (CPSCEAVLYRPELEKTLDVCPKC).

It belongs to the AccD/PCCB family. In terms of assembly, acetyl-CoA carboxylase is a heterohexamer composed of biotin carboxyl carrier protein (AccB), biotin carboxylase (AccC) and two subunits each of ACCase subunit alpha (AccA) and ACCase subunit beta (AccD). Requires Zn(2+) as cofactor.

The protein resides in the cytoplasm. The catalysed reaction is N(6)-carboxybiotinyl-L-lysyl-[protein] + acetyl-CoA = N(6)-biotinyl-L-lysyl-[protein] + malonyl-CoA. Its pathway is lipid metabolism; malonyl-CoA biosynthesis; malonyl-CoA from acetyl-CoA: step 1/1. Component of the acetyl coenzyme A carboxylase (ACC) complex. Biotin carboxylase (BC) catalyzes the carboxylation of biotin on its carrier protein (BCCP) and then the CO(2) group is transferred by the transcarboxylase to acetyl-CoA to form malonyl-CoA. This is Acetyl-coenzyme A carboxylase carboxyl transferase subunit beta from Pseudomonas putida (strain ATCC 700007 / DSM 6899 / JCM 31910 / BCRC 17059 / LMG 24140 / F1).